An 88-amino-acid polypeptide reads, in one-letter code: Antitoxin HipB (88 aa).

Positions 17–71 constitute an HTH cro/C1-type domain; sequence MKLVRQQNGWTQSELAKKIGIKQATISNFENNPDNTTLTTFFKILQSLELSMTLC. A DNA-binding region (H-T-H motif) is located at residues 21–47; it reads RQQNGWTQSELAKKIGIKQATISNFEN.

Homodimer. Binds operator DNA sites in the absence of HipA, inducing a 70 degree bend in consecutive operators and deforming DNA between the operators so that HipB dimers bind on opposite faces of the DNA. Forms a HipA(2)HipB(2) heterotetramer which can interact with a single operator site on DNA, inducing a 70 degree bend. When 2 operators are present each HipB dimer contacts 1 HipA molecule, which are brought together by the DNA bend and dimerize, blocking the HipA active site and inactivating its toxic activity. HipA-HipB-induced bending also distorts the -35 and -10 boxes of the promoter and probably prevents sigma-factor binding, and additionally bound HipB and HipA block RNA polymerase access to the -35 box, thus repressing the operon. This complex also blocks the toxic activity of HipA. Mutations present in allele hipA7 (G22S and D291A) decrease the affinity of HipA for HipB. Post-translationally, degraded by Lon protease in vivo; half-life is 17 minutes in wild-type cells and over 200 minutes in a lon deletion strain. In vitro degradation by Lon is Mg(2+)-ATP-dependent.

With respect to regulation, degraded by Lon protease; degradation is inhibited in a HipA-HipB complex and when bound to the operator consensus sequence dsDNA. Its function is as follows. Antitoxin component of a type II toxin-antitoxin (TA) system. Neutralizes the toxic effect of cognate toxin HipA. Also neutralizes the toxic effect of non-cognate toxin YjjJ. Binds to operator sites with the consensus sequence 5-'TATCCN(8)GGATA-3' to repress the hipBA operon promoter; binding of HipB(2) to DNA induces a 70 degree bend. This forces HipA dimerization, which blocks HipA's active site and thus its toxic action. May play a role in biofilm formation. In Escherichia coli (strain K12), this protein is Antitoxin HipB (hipB).